The following is a 318-amino-acid chain: Ubiquinol oxidase, mitochondrial (318 aa).

Residues 1–46 (MTVMRGLLNGGRYGNRYIWTAISLRHPEVMEGNGLESAVMQWRRML) constitute a mitochondrion transit peptide. A helical membrane pass occupies residues 143 to 163 (AMMLETVAAVPGMVGGMLLHL). Fe cation-binding residues include Glu-147, Glu-186, and His-189. The helical transmembrane segment at 205–225 (LLVLAVQGVFFNSFFVLYVLS) threads the bilayer. 3 residues coordinate Fe cation: Glu-237, Glu-288, and His-291.

Belongs to the alternative oxidase family. As to quaternary structure, homodimer; disulfide-linked. Fe cation is required as a cofactor.

The protein resides in the mitochondrion inner membrane. The enzyme catalyses 2 a ubiquinol + O2 = 2 a ubiquinone + 2 H2O. Functionally, catalyzes the cyanide-resistant oxidation of ubiquinol and the reduction of molecular oxygen to water, but does not translocate protons and consequently is not linked to oxidative phosphorylation. May increase respiration when the cytochrome respiratory pathway is restricted, or in response to low temperatures. This is Ubiquinol oxidase, mitochondrial (AOMI 1) from Mangifera indica (Mango).